The primary structure comprises 717 residues: Fatty acid oxidation complex subunit alpha (717 aa).

The enoyl-CoA hydratase stretch occupies residues 1–190 (MESTSAFNLQ…KAGLVDDVVP (190 aa)). Residues 306–717 (RALHSVGVLG…AGNLQAEMTV (412 aa)) are 3-hydroxyacyl-CoA dehydrogenase.

In the N-terminal section; belongs to the enoyl-CoA hydratase/isomerase family. It in the central section; belongs to the 3-hydroxyacyl-CoA dehydrogenase family. In terms of assembly, heterotetramer of two alpha chains (FadJ) and two beta chains (FadI).

Its subcellular location is the cytoplasm. The catalysed reaction is a (3S)-3-hydroxyacyl-CoA = a (2E)-enoyl-CoA + H2O. The enzyme catalyses a 4-saturated-(3S)-3-hydroxyacyl-CoA = a (3E)-enoyl-CoA + H2O. It carries out the reaction a (3S)-3-hydroxyacyl-CoA + NAD(+) = a 3-oxoacyl-CoA + NADH + H(+). It catalyses the reaction (3S)-3-hydroxybutanoyl-CoA = (3R)-3-hydroxybutanoyl-CoA. The protein operates within lipid metabolism; fatty acid beta-oxidation. Functionally, catalyzes the formation of a hydroxyacyl-CoA by addition of water on enoyl-CoA. Also exhibits 3-hydroxyacyl-CoA epimerase and 3-hydroxyacyl-CoA dehydrogenase activities. The chain is Fatty acid oxidation complex subunit alpha from Cronobacter sakazakii (strain ATCC BAA-894) (Enterobacter sakazakii).